Consider the following 180-residue polypeptide: Large ribosomal subunit protein uL5 (180 aa).

The protein belongs to the universal ribosomal protein uL5 family. In terms of assembly, part of the 50S ribosomal subunit; part of the 5S rRNA/L5/L18/L25 subcomplex. Contacts the 5S rRNA and the P site tRNA. Forms a bridge to the 30S subunit in the 70S ribosome.

Functionally, this is one of the proteins that bind and probably mediate the attachment of the 5S RNA into the large ribosomal subunit, where it forms part of the central protuberance. In the 70S ribosome it contacts protein S13 of the 30S subunit (bridge B1b), connecting the 2 subunits; this bridge is implicated in subunit movement. Contacts the P site tRNA; the 5S rRNA and some of its associated proteins might help stabilize positioning of ribosome-bound tRNAs. This is Large ribosomal subunit protein uL5 from Lactobacillus delbrueckii subsp. bulgaricus (strain ATCC 11842 / DSM 20081 / BCRC 10696 / JCM 1002 / NBRC 13953 / NCIMB 11778 / NCTC 12712 / WDCM 00102 / Lb 14).